Here is a 473-residue protein sequence, read N- to C-terminus: Photosystem II CP43 reaction center protein (473 aa).

Residues 1 to 14 (MKTLYSLRRFYPVE) constitute a propeptide that is removed on maturation. Threonine 15 bears the N-acetylthreonine mark. Phosphothreonine is present on threonine 15. Helical transmembrane passes span 69–93 (LFEV…PHLA), 134–155 (LLGP…KDRN), 178–200 (KALY…RKIT), 255–275 (KPFA…LSYS), and 291–312 (WFNN…ASQA). Glutamate 367 contributes to the [CaMn4O5] cluster binding site. The helical transmembrane segment at 447–471 (RARAAAAGFEKGIDRDFEPVLSMTP) threads the bilayer.

Belongs to the PsbB/PsbC family. PsbC subfamily. In terms of assembly, PSII is composed of 1 copy each of membrane proteins PsbA, PsbB, PsbC, PsbD, PsbE, PsbF, PsbH, PsbI, PsbJ, PsbK, PsbL, PsbM, PsbT, PsbX, PsbY, PsbZ, Psb30/Ycf12, at least 3 peripheral proteins of the oxygen-evolving complex and a large number of cofactors. It forms dimeric complexes. Requires Binds multiple chlorophylls and provides some of the ligands for the Ca-4Mn-5O cluster of the oxygen-evolving complex. It may also provide a ligand for a Cl- that is required for oxygen evolution. PSII binds additional chlorophylls, carotenoids and specific lipids. as cofactor.

Its subcellular location is the plastid. It is found in the chloroplast thylakoid membrane. Its function is as follows. One of the components of the core complex of photosystem II (PSII). It binds chlorophyll and helps catalyze the primary light-induced photochemical processes of PSII. PSII is a light-driven water:plastoquinone oxidoreductase, using light energy to abstract electrons from H(2)O, generating O(2) and a proton gradient subsequently used for ATP formation. The protein is Photosystem II CP43 reaction center protein of Panax ginseng (Korean ginseng).